The following is a 142-amino-acid chain: MRRQSQRGFTLLEIMVVIVIMGILASLVVPNLMGNKDKADRQKVVSDIVALESALDMYKLDNSRYPTTEQGLQALITKPSVPPEARYYPQDGYIRRLPQDPWGGDYQLVSPGQHGQIDIFSSGQDGVPGTDDDIGNWTLSKK.

A propeptide spans 1 to 8 (MRRQSQRG) (leader sequence). The residue at position 9 (Phe-9) is an N-methylphenylalanine. A helical transmembrane segment spans residues 9-29 (FTLLEIMVVIVIMGILASLVV). The segment at 122–142 (SGQDGVPGTDDDIGNWTLSKK) is disordered.

The protein belongs to the GSP G family. Type II secretion system is composed of four main components: the outer membrane complex, the inner membrane complex, the cytoplasmic secretion ATPase and the periplasm-spanning pseudopilus. Forms homomultimers. Post-translationally, cleaved by the prepilin peptidase. In terms of processing, methylated by prepilin peptidase at the amino group of the N-terminal phenylalanine once the leader sequence is cleaved.

The protein resides in the cell inner membrane. In terms of biological role, core component of the type II secretion system required for the energy-dependent secretion of extracellular factors such as proteases and toxins from the periplasm. Pseudopilin (pilin-like) protein that polymerizes to form the pseudopilus. Further polymerization triggers pseudopilus growth. In Klebsiella michiganensis (strain ATCC 8724 / DSM 4798 / JCM 20051 / NBRC 3318 / NRRL B-199 / KCTC 1686 / BUCSAV 143 / CCM 1901), this protein is Type II secretion system core protein G.